A 404-amino-acid polypeptide reads, in one-letter code: Glycerol-1-phosphate dehydrogenase [NAD(P)+] (404 aa).

Residues Asp55, 117-121 (GTVHD), and 139-142 (TAPS) contribute to the NAD(+) site. Substrate is bound at residue Asp144. Ser148 lines the NAD(+) pocket. A substrate-binding site is contributed by Asp191. 2 residues coordinate Ni(2+): Asp191 and His271. His275 is a substrate binding site. His291 is a Ni(2+) binding site.

This sequence belongs to the glycerol-1-phosphate dehydrogenase family. In terms of assembly, homodimer. Requires Ni(2+) as cofactor.

The protein localises to the cytoplasm. The catalysed reaction is sn-glycerol 1-phosphate + NAD(+) = dihydroxyacetone phosphate + NADH + H(+). It catalyses the reaction sn-glycerol 1-phosphate + NADP(+) = dihydroxyacetone phosphate + NADPH + H(+). Its function is as follows. Catalyzes the NAD(P)H-dependent reduction of dihydroxyacetonephosphate (DHAP or glycerone phosphate) to glycerol 1-phosphate (G1P). The G1P thus generated is probably used for the synthesis of phosphoglycerolipids in Gram-positive bacterial species. In Geobacillus thermodenitrificans (strain NG80-2), this protein is Glycerol-1-phosphate dehydrogenase [NAD(P)+].